The chain runs to 594 residues: MSAILSADDLNDFISPGVACIKPVTQPKSELNPQHVDSSSTISETGEVEIQIDSQGNPLEISQIDTKINKADPSSTALTPAQISLADCLACSGCITSAEEVLVAQHSHHELLKAMEESSLASGTEKVFVASISQQLRASLAMAYDMSIEEMDKLLINLFVNQMGFQYVVGTSLGRKLSLINESQGMIHRKEEGKTIGENLKNPVLSSICPGWVLYAEKTHPYVLPYISTVKSAQQITGCLLKNLTAYERGIGKSKVYHLTIMPCFDKKLESARPELFANHDGADNVPDVDCVLTARELVTLIDESLGKYQLVPKVIPQTLLRKDIAEVYKSAAPTNWPFVQYSWSNDPGSSSGGYAYTYLRLFQEQLITTQNYRPEDFSMKVLQGKNTDVYEMRLLHNGNQVASSAIVNGFRNIQNLVRKLKPGNNNNKVGGLAIKVNPLVARRRARMSKSEDSSGASASSMAPAEIADPSKVDYVEIMACPQGCINGGGQIAAPAPTSTPPAAPAPAHAATSTTDVKIAVVLNKDWVSEVLMKYNSVPMFDLSLHPEEIAGFIQWSQEFEKEFDVSEQRLFKTHFNEIEKPTDATAIMVGSKW.

[4Fe-4S] cluster contacts are provided by C20, C88, C91, C94, C209, and C264. Residues 444 to 465 are disordered; sequence RRARMSKSEDSSGASASSMAPA. Residues 454 to 465 show a composition bias toward low complexity; sequence SSGASASSMAPA. The [4Fe-4S] cluster site is built by C481 and C485. A disordered region spans residues 492-511; that stretch reads IAAPAPTSTPPAAPAPAHAA.

This sequence belongs to the NARF family.

Functionally, component of the cytosolic Fe/S protein assembly machinery. Required for maturation of extramitochondrial Fe/S proteins. May play a role in the transfer of pre-assembled Fe/S clusters to target apoproteins. This is Cytosolic Fe-S cluster assembly factor NAR1 (NAR1) from Lodderomyces elongisporus (strain ATCC 11503 / CBS 2605 / JCM 1781 / NBRC 1676 / NRRL YB-4239) (Yeast).